The primary structure comprises 499 residues: MASREVSTMIKQGFIADPSLSFSPSRISSPIKLSTASPPLPPPPPPPPNESTLSNPTLFDMMSDEHNRELPRRKSHARVAQILTEFKNGVVYGHSLGPGDVKLTVVGKDGYRVTMDVHRKVLSEKSRFFMEKMNSRREKGVSHMVEISECDDLEIYVETVVLMYSDDLKKKLIGENVIKILALLKVSAAISFDEGVMSCLEHLEAVPWSEDEEETVVTCLEELHLPDDSVTLILQRVSSQPSTSSTRTRTDDIFSKLLTGVLQAKDDKARREMKVLIFKLVREEADYDVSRDTLYGLCHRCLTSLVLCLSEVTTQMNDPGKDRGALMGEIAREADNMLWMVDILIEKKLCSEFVKLWADQKELANLHSKIPTMYRHEISKITAQICVGIGKGRILVNRETRFAVLNTWLEALYDDFGWMRRLSSRSLDRKLVEDGLSQTILTLSLRQQQVILMKWFDRFLSKGDDCPNVQRAFEVWWRRAFIRQVLTEPDEPRLQITLY.

The segment covering 18 to 30 (PSLSFSPSRISSP) has biased composition (low complexity). The segment at 18–57 (PSLSFSPSRISSPIKLSTASPPLPPPPPPPPNESTLSNPT) is disordered. A compositionally biased stretch (pro residues) spans 38 to 49 (PPLPPPPPPPPN). The 74-residue stretch at 99–172 (GDVKLTVVGK…MYSDDLKKKL (74 aa)) folds into the BTB domain.

It functions in the pathway protein modification; protein ubiquitination. Functionally, may act as a substrate-specific adapter of an E3 ubiquitin-protein ligase complex (CUL3-RBX1-BTB) which mediates the ubiquitination and subsequent proteasomal degradation of target proteins. This Arabidopsis thaliana (Mouse-ear cress) protein is BTB/POZ domain-containing protein At5g60050.